The primary structure comprises 103 residues: Small ribosomal subunit protein uS10 (103 aa).

This sequence belongs to the universal ribosomal protein uS10 family. Part of the 30S ribosomal subunit.

In terms of biological role, involved in the binding of tRNA to the ribosomes. The protein is Small ribosomal subunit protein uS10 of Psychromonas ingrahamii (strain DSM 17664 / CCUG 51855 / 37).